Reading from the N-terminus, the 1065-residue chain is Isoleucine--tRNA ligase (1065 aa).

The 'HIGH' region signature appears at 49 to 59 (PYVSGAIHLGT). Residues 625-629 (KMSKS) carry the 'KMSKS' region motif. Residue lysine 628 coordinates ATP.

The protein belongs to the class-I aminoacyl-tRNA synthetase family. IleS type 2 subfamily. As to quaternary structure, monomer. It depends on Zn(2+) as a cofactor.

It localises to the cytoplasm. The enzyme catalyses tRNA(Ile) + L-isoleucine + ATP = L-isoleucyl-tRNA(Ile) + AMP + diphosphate. Functionally, catalyzes the attachment of isoleucine to tRNA(Ile). As IleRS can inadvertently accommodate and process structurally similar amino acids such as valine, to avoid such errors it has two additional distinct tRNA(Ile)-dependent editing activities. One activity is designated as 'pretransfer' editing and involves the hydrolysis of activated Val-AMP. The other activity is designated 'posttransfer' editing and involves deacylation of mischarged Val-tRNA(Ile). The chain is Isoleucine--tRNA ligase from Thermococcus kodakarensis (strain ATCC BAA-918 / JCM 12380 / KOD1) (Pyrococcus kodakaraensis (strain KOD1)).